Reading from the N-terminus, the 403-residue chain is Dynactin subunit 2 (403 aa).

A disordered region spans residues 1–26 (MADPKYADLPGIARNEPDVYETSDLP). An N-acetylalanine modification is found at alanine 2. Tyrosine 6 bears the Phosphotyrosine mark. Serine 83 is modified (phosphoserine). Phosphotyrosine is present on tyrosine 86. The stretch at 100-130 (QQKYQRLLHEVQELTTEVEKIKTTVKESATE) forms a coiled coil. Phosphothreonine is present on residues threonine 134 and threonine 200. Residues 184 to 204 (TKNSKGTGSGGKTTSGTPPDS) are disordered. The stretch at 216 to 248 (EQDKFSQAAKVAELEKRLTELEATVRCDQDAQN) forms a coiled coil. Serine 322 carries the post-translational modification Phosphoserine.

The protein belongs to the dynactin subunit 2 family. In terms of assembly, subunit of dynactin, a multiprotein complex part of a tripartite complex with dynein and a adapter, such as BICDL1, BICD2 or HOOK3. The dynactin complex is built around ACTR1A/ACTB filament and consists of an actin-related filament composed of a shoulder domain, a pointed end and a barbed end. Its length is defined by its flexible shoulder domain. The soulder is composed of 2 DCTN1 subunits, 4 DCTN2 and 2 DCTN3. The 4 DCNT2 (via N-terminus) bind the ACTR1A filament and act as molecular rulers to determine the length. The pointed end is important for binding dynein-dynactin cargo adapters and consists of 4 subunits: ACTR10, DCNT4, DCTN5 and DCTN6. The barbed end is composed of a CAPZA1:CAPZB heterodimers, which binds ACTR1A/ACTB filament and dynactin and stabilizes dynactin. Interacts with BICD2 and CEP135. Interacts with DYNAP. Interacts with ECPAS. Interacts with MAPRE1.

The protein resides in the cytoplasm. It localises to the cytoskeleton. The protein localises to the microtubule organizing center. Its subcellular location is the centrosome. It is found in the membrane. In terms of biological role, part of the dynactin complex that activates the molecular motor dynein for ultra-processive transport along microtubules. In the dynactin soulder domain, binds the ACTR1A filament and acts as a molecular ruler to determine the length. Modulates cytoplasmic dynein binding to an organelle, and plays a role in prometaphase chromosome alignment and spindle organization during mitosis. Involved in anchoring microtubules to centrosomes. May play a role in synapse formation during brain development. The sequence is that of Dynactin subunit 2 (DCTN2) from Bos taurus (Bovine).